A 56-amino-acid chain; its full sequence is Preprotein translocase subunit SecG (56 aa).

The Cytoplasmic segment spans residues 1-29 (MAKEKATLPPTGAGLMRFFDEDTKAVKIS). A helical membrane pass occupies residues 30 to 51 (PRGVIALTLILVALEILLHAFG). Topologically, residues 52 to 56 (PQIFG) are extracellular.

It belongs to the SEC61-beta family. As to quaternary structure, component of the protein translocase complex. Heterotrimer consisting of alpha (SecY), beta (SecG) and gamma (SecE) subunits. Can form oligomers of the heterotrimer.

The protein localises to the cell membrane. Functionally, involved in protein export. The function of the beta subunit is unknown, but it may be involved in stabilization of the trimeric complex. The chain is Preprotein translocase subunit SecG from Thermococcus onnurineus (strain NA1).